Consider the following 276-residue polypeptide: Borealin (276 aa).

A disordered region spans residues K111–T158.

It belongs to the borealin family. As to quaternary structure, component of the CPC complex.

The protein localises to the nucleus. It localises to the chromosome. It is found in the centromere. Its subcellular location is the cytoplasm. The protein resides in the cytoskeleton. The protein localises to the spindle. Its function is as follows. Component of the chromosomal passenger complex (CPC), a complex that acts as a key regulator of mitosis. The CPC complex has essential functions at the centromere in ensuring correct chromosome alignment and segregation and is required for chromatin-induced microtubule stabilization and spindle assembly. This Danio rerio (Zebrafish) protein is Borealin (cdca8).